We begin with the raw amino-acid sequence, 71 residues long: Small ribosomal subunit protein bS18 (71 aa).

Belongs to the bacterial ribosomal protein bS18 family. In terms of assembly, part of the 30S ribosomal subunit. Forms a tight heterodimer with protein bS6.

In terms of biological role, binds as a heterodimer with protein bS6 to the central domain of the 16S rRNA, where it helps stabilize the platform of the 30S subunit. The protein is Small ribosomal subunit protein bS18 of Dichelobacter nodosus (strain VCS1703A).